The following is a 327-amino-acid chain: Gonadotropin-releasing hormone receptor (327 aa).

Residues 1-37 (MASASPEQNQNHCSAVNNSNMLMQGNLPTLTLSGKIR) are Extracellular-facing. The N-linked (GlcNAc...) asparagine glycan is linked to Asn17. Residues 38 to 57 (VTVTFFLFLLSTIFNASFLL) form a helical membrane-spanning segment. Residues 58 to 76 (KLQKWTQKKEKGKKLSRMK) lie on the Cytoplasmic side of the membrane. A helical membrane pass occupies residues 77–96 (VLLKHLTLANLLETLIVMPL). The Extracellular segment spans residues 97-114 (DGMWNITVQWYAGEFLCK). N-linked (GlcNAc...) asparagine glycosylation is present at Asn101. A disulfide bridge links Cys113 with Cys195. A helical transmembrane segment spans residues 115–136 (VLSYLKLFSMYAPAFMMVVISL). The Cytoplasmic portion of the chain corresponds to 137 to 163 (DRSLAITRPLAMKNNGKLGQSMIGLAW). The chain crosses the membrane as a helical span at residues 164–183 (LLSGIFAGPQLYIFRMIHLA). Residues 184 to 211 (DSSGQTEGFPQCVTHCSFPQWWHQAFYN) lie on the Extracellular side of the membrane. The helical transmembrane segment at 212–231 (FFTFSCLFIIPLFITLICNA) threads the bilayer. Over 232–280 (KIIFTLTRVLHQDPHELQLNQSKNNIPRARLRTLKMTVAFATSFTVCWT) the chain is Cytoplasmic. The chain crosses the membrane as a helical span at residues 281–299 (PYYVLGIWYWFDPEMLNRV). Residues 300–305 (SDPVNH) are Extracellular-facing. A helical transmembrane segment spans residues 306–325 (FFFLFALLNPCFDPLIYGYF). Over 326-327 (SL) the chain is Cytoplasmic.

The protein belongs to the G-protein coupled receptor 1 family.

The protein resides in the cell membrane. Functionally, receptor for gonadotropin releasing hormone (GnRH) that mediates the action of GnRH to stimulate the secretion of the gonadotropic hormones luteinizing hormone (LH) and follicle-stimulating hormone (FSH). This receptor mediates its action by association with G-proteins that activate a phosphatidylinositol-calcium second messenger system. The polypeptide is Gonadotropin-releasing hormone receptor (GNRHR) (Canis lupus familiaris (Dog)).